An 85-amino-acid chain; its full sequence is Small ribosomal subunit protein uS15 (85 aa).

This sequence belongs to the universal ribosomal protein uS15 family. As to quaternary structure, part of the 30S ribosomal subunit. Forms a bridge to the 50S subunit in the 70S ribosome, contacting the 23S rRNA.

Its function is as follows. One of the primary rRNA binding proteins, it binds directly to 16S rRNA where it helps nucleate assembly of the platform of the 30S subunit by binding and bridging several RNA helices of the 16S rRNA. In terms of biological role, forms an intersubunit bridge (bridge B4) with the 23S rRNA of the 50S subunit in the ribosome. In Fusobacterium nucleatum subsp. nucleatum (strain ATCC 25586 / DSM 15643 / BCRC 10681 / CIP 101130 / JCM 8532 / KCTC 2640 / LMG 13131 / VPI 4355), this protein is Small ribosomal subunit protein uS15.